The chain runs to 35 residues: Conotoxin M11.2 (35 aa).

4 disulfide bridges follow: cysteine 2-cysteine 16, cysteine 9-cysteine 21, cysteine 15-cysteine 26, and cysteine 20-cysteine 33.

The protein belongs to the conotoxin I1 superfamily. Expressed by the venom duct.

The protein localises to the secreted. This chain is Conotoxin M11.2, found in Conus magus (Magical cone).